A 108-amino-acid chain; its full sequence is X antigen family member 5 (108 aa).

A disordered region spans residues 20-108; that stretch reads VGPMLEPSVP…PEGGEGKPQL (89 aa). Composition is skewed to basic and acidic residues over residues 40–52 and 94–108; these read SQDH…REDD and EQFK…KPQL.

It belongs to the GAGE family.

The protein is X antigen family member 5 (XAGE5) of Homo sapiens (Human).